The sequence spans 68 residues: U1-hexatoxin-Hv1a (68 aa).

5 disulfide bridges follow: C3-C14, C8-C22, C13-C48, C32-C56, and C50-C63.

The protein belongs to the MIT-like AcTx family. As to expression, expressed by the venom gland.

It is found in the secreted. The sequence is that of U1-hexatoxin-Hv1a from Hadronyche versuta (Blue mountains funnel-web spider).